The following is a 432-amino-acid chain: Ribosomal protein uS12 methylthiotransferase RimO (432 aa).

One can recognise an MTTase N-terminal domain in the interval Met1–Lys112. Residues Cys10, Cys46, Cys75, Cys134, Cys138, and Cys141 each contribute to the [4Fe-4S] cluster site. In terms of domain architecture, Radical SAM core spans Ser120–Lys350. Residues Glu353 to Glu422 enclose the TRAM domain.

This sequence belongs to the methylthiotransferase family. RimO subfamily. It depends on [4Fe-4S] cluster as a cofactor.

The protein localises to the cytoplasm. It catalyses the reaction L-aspartate(89)-[ribosomal protein uS12]-hydrogen + (sulfur carrier)-SH + AH2 + 2 S-adenosyl-L-methionine = 3-methylsulfanyl-L-aspartate(89)-[ribosomal protein uS12]-hydrogen + (sulfur carrier)-H + 5'-deoxyadenosine + L-methionine + A + S-adenosyl-L-homocysteine + 2 H(+). Functionally, catalyzes the methylthiolation of an aspartic acid residue of ribosomal protein uS12. This Aquifex aeolicus (strain VF5) protein is Ribosomal protein uS12 methylthiotransferase RimO.